The following is a 120-amino-acid chain: Phosphoribosyl-AMP cyclohydrolase (120 aa).

Residue D74 participates in Mg(2+) binding. C75 provides a ligand contact to Zn(2+). D76 and D78 together coordinate Mg(2+). 2 residues coordinate Zn(2+): C91 and C98.

It belongs to the PRA-CH family. In terms of assembly, homodimer. The cofactor is Mg(2+). Zn(2+) is required as a cofactor.

It localises to the cytoplasm. It carries out the reaction 1-(5-phospho-beta-D-ribosyl)-5'-AMP + H2O = 1-(5-phospho-beta-D-ribosyl)-5-[(5-phospho-beta-D-ribosylamino)methylideneamino]imidazole-4-carboxamide. It functions in the pathway amino-acid biosynthesis; L-histidine biosynthesis; L-histidine from 5-phospho-alpha-D-ribose 1-diphosphate: step 3/9. In terms of biological role, catalyzes the hydrolysis of the adenine ring of phosphoribosyl-AMP. This chain is Phosphoribosyl-AMP cyclohydrolase, found in Natronomonas pharaonis (strain ATCC 35678 / DSM 2160 / CIP 103997 / JCM 8858 / NBRC 14720 / NCIMB 2260 / Gabara) (Halobacterium pharaonis).